The sequence spans 275 residues: NH(3)-dependent NAD(+) synthetase (275 aa).

46–53 (GISGGQDS) lines the ATP pocket. Position 52 (Asp-52) interacts with Mg(2+). A deamido-NAD(+)-binding site is contributed by Arg-140. Residue Thr-160 coordinates ATP. Glu-165 is a binding site for Mg(2+). Lys-173 and Asp-180 together coordinate deamido-NAD(+). ATP-binding residues include Lys-189 and Thr-211. Position 260 to 261 (260 to 261 (HK)) interacts with deamido-NAD(+).

It belongs to the NAD synthetase family. As to quaternary structure, homodimer.

It carries out the reaction deamido-NAD(+) + NH4(+) + ATP = AMP + diphosphate + NAD(+) + H(+). The protein operates within cofactor biosynthesis; NAD(+) biosynthesis; NAD(+) from deamido-NAD(+) (ammonia route): step 1/1. Catalyzes the ATP-dependent amidation of deamido-NAD to form NAD. Uses ammonia as a nitrogen source. In Escherichia coli O139:H28 (strain E24377A / ETEC), this protein is NH(3)-dependent NAD(+) synthetase.